Consider the following 473-residue polypeptide: Bifunctional protein GlmU (473 aa).

The segment at 1–226 is pyrophosphorylase; sequence MRAPVAVVIL…AGEASGINDL (226 aa). UDP-N-acetyl-alpha-D-glucosamine is bound by residues 10 to 13, K24, Q75, 80 to 81, 102 to 104, G136, E151, N166, and N224; these read LAAG, GT, and YGD. Residue D104 coordinates Mg(2+). N224 is a Mg(2+) binding site. The segment at 227–247 is linker; that stretch reads VQLAEVEEAFQRRWARRLLQG. The tract at residues 248–473 is N-acetyltransferase; it reads GLRLVAPHRF…TPASGGAKEE (226 aa). UDP-N-acetyl-alpha-D-glucosamine-binding residues include R330 and K348. Catalysis depends on H360, which acts as the Proton acceptor. UDP-N-acetyl-alpha-D-glucosamine-binding residues include Y363 and N374. Acetyl-CoA contacts are provided by residues A377, 383–384, S402, A420, and R437; that span reads NY. Positions 439-473 are disordered; the sequence is RARTIPGWQHPGLTGRRGPPDDNDATPASGGAKEE.

This sequence in the N-terminal section; belongs to the N-acetylglucosamine-1-phosphate uridyltransferase family. In the C-terminal section; belongs to the transferase hexapeptide repeat family. Homotrimer. Requires Mg(2+) as cofactor.

It localises to the cytoplasm. It catalyses the reaction alpha-D-glucosamine 1-phosphate + acetyl-CoA = N-acetyl-alpha-D-glucosamine 1-phosphate + CoA + H(+). The catalysed reaction is N-acetyl-alpha-D-glucosamine 1-phosphate + UTP + H(+) = UDP-N-acetyl-alpha-D-glucosamine + diphosphate. It functions in the pathway nucleotide-sugar biosynthesis; UDP-N-acetyl-alpha-D-glucosamine biosynthesis; N-acetyl-alpha-D-glucosamine 1-phosphate from alpha-D-glucosamine 6-phosphate (route II): step 2/2. The protein operates within nucleotide-sugar biosynthesis; UDP-N-acetyl-alpha-D-glucosamine biosynthesis; UDP-N-acetyl-alpha-D-glucosamine from N-acetyl-alpha-D-glucosamine 1-phosphate: step 1/1. It participates in bacterial outer membrane biogenesis; LPS lipid A biosynthesis. Catalyzes the last two sequential reactions in the de novo biosynthetic pathway for UDP-N-acetylglucosamine (UDP-GlcNAc). The C-terminal domain catalyzes the transfer of acetyl group from acetyl coenzyme A to glucosamine-1-phosphate (GlcN-1-P) to produce N-acetylglucosamine-1-phosphate (GlcNAc-1-P), which is converted into UDP-GlcNAc by the transfer of uridine 5-monophosphate (from uridine 5-triphosphate), a reaction catalyzed by the N-terminal domain. This chain is Bifunctional protein GlmU, found in Halorhodospira halophila (strain DSM 244 / SL1) (Ectothiorhodospira halophila (strain DSM 244 / SL1)).